A 428-amino-acid chain; its full sequence is Serine--tRNA ligase (428 aa).

Position 235–237 (235–237) interacts with L-serine; the sequence is TAE. 266 to 268 serves as a coordination point for ATP; the sequence is RYE. Glu-289 contacts L-serine. Residue 353-356 coordinates ATP; sequence EVSS. Ser-389 is an L-serine binding site.

It belongs to the class-II aminoacyl-tRNA synthetase family. Type-1 seryl-tRNA synthetase subfamily. Homodimer. The tRNA molecule binds across the dimer.

Its subcellular location is the cytoplasm. The enzyme catalyses tRNA(Ser) + L-serine + ATP = L-seryl-tRNA(Ser) + AMP + diphosphate + H(+). It catalyses the reaction tRNA(Sec) + L-serine + ATP = L-seryl-tRNA(Sec) + AMP + diphosphate + H(+). It functions in the pathway aminoacyl-tRNA biosynthesis; selenocysteinyl-tRNA(Sec) biosynthesis; L-seryl-tRNA(Sec) from L-serine and tRNA(Sec): step 1/1. Functionally, catalyzes the attachment of serine to tRNA(Ser). Is also able to aminoacylate tRNA(Sec) with serine, to form the misacylated tRNA L-seryl-tRNA(Sec), which will be further converted into selenocysteinyl-tRNA(Sec). The polypeptide is Serine--tRNA ligase (Blochmanniella pennsylvanica (strain BPEN)).